Consider the following 449-residue polypeptide: Adenylyltransferase and sulfurtransferase MOCS3 (449 aa).

ATP contacts are provided by residues Gly96, Asp117, 124–128 (SNLHR), Lys141, and 185–186 (DN). Cys227 and Cys230 together coordinate Zn(2+). The Glycyl thioester intermediate; for adenylyltransferase activity role is filled by Cys244. The Zn(2+) site is built by Cys302 and Cys305. One can recognise a Rhodanese domain in the interval 351–447 (QDKPHLLLDV…WTNQIDENFP (97 aa)). The active-site Cysteine persulfide intermediate; for sulfurtransferase activity is the Cys406.

In the N-terminal section; belongs to the HesA/MoeB/ThiF family. UBA4 subfamily. Requires Zn(2+) as cofactor.

It localises to the cytoplasm. Its subcellular location is the cytosol. The catalysed reaction is [molybdopterin-synthase sulfur-carrier protein]-C-terminal Gly-Gly + ATP + H(+) = [molybdopterin-synthase sulfur-carrier protein]-C-terminal Gly-Gly-AMP + diphosphate. It catalyses the reaction [molybdopterin-synthase sulfur-carrier protein]-C-terminal Gly-Gly-AMP + S-sulfanyl-L-cysteinyl-[cysteine desulfurase] + AH2 = [molybdopterin-synthase sulfur-carrier protein]-C-terminal-Gly-aminoethanethioate + L-cysteinyl-[cysteine desulfurase] + A + AMP + 2 H(+). Its pathway is tRNA modification; 5-methoxycarbonylmethyl-2-thiouridine-tRNA biosynthesis. The protein operates within cofactor biosynthesis; molybdopterin biosynthesis. In terms of biological role, plays a central role in 2-thiolation of mcm(5)S(2)U at tRNA wobble positions of cytosolic tRNA(Lys), tRNA(Glu) and tRNA(Gln). Also essential during biosynthesis of the molybdenum cofactor. Acts by mediating the C-terminal thiocarboxylation of sulfur carriers URM1 and MOCS2A. Its N-terminus first activates URM1 and MOCS2A as acyl-adenylates (-COAMP), then the persulfide sulfur on the catalytic cysteine is transferred to URM1 and MOCS2A to form thiocarboxylation (-COSH) of their C-terminus. The reaction probably involves hydrogen sulfide that is generated from the persulfide intermediate and that acts as a nucleophile towards URM1 and MOCS2A. Subsequently, a transient disulfide bond is formed. Does not use thiosulfate as sulfur donor; NFS1 probably acting as a sulfur donor for thiocarboxylation reactions. In Drosophila grimshawi (Hawaiian fruit fly), this protein is Adenylyltransferase and sulfurtransferase MOCS3.